The following is a 256-amino-acid chain: Imidazole glycerol phosphate synthase subunit HisF (256 aa).

Active-site residues include Asp11 and Asp130.

The protein belongs to the HisA/HisF family. Heterodimer of HisH and HisF.

It localises to the cytoplasm. The enzyme catalyses 5-[(5-phospho-1-deoxy-D-ribulos-1-ylimino)methylamino]-1-(5-phospho-beta-D-ribosyl)imidazole-4-carboxamide + L-glutamine = D-erythro-1-(imidazol-4-yl)glycerol 3-phosphate + 5-amino-1-(5-phospho-beta-D-ribosyl)imidazole-4-carboxamide + L-glutamate + H(+). Its pathway is amino-acid biosynthesis; L-histidine biosynthesis; L-histidine from 5-phospho-alpha-D-ribose 1-diphosphate: step 5/9. IGPS catalyzes the conversion of PRFAR and glutamine to IGP, AICAR and glutamate. The HisF subunit catalyzes the cyclization activity that produces IGP and AICAR from PRFAR using the ammonia provided by the HisH subunit. In Thioalkalivibrio sulfidiphilus (strain HL-EbGR7), this protein is Imidazole glycerol phosphate synthase subunit HisF.